A 149-amino-acid chain; its full sequence is Transcription factor bHLH153 (149 aa).

The bHLH domain maps to 27–76 (RHKSDLSFSSKERKDKVGERISALQQIVSPYGKTDTASVLLDAMHYIEFL).

Belongs to the bHLH protein family.

The protein resides in the nucleus. This chain is Transcription factor bHLH153, found in Arabidopsis thaliana (Mouse-ear cress).